Consider the following 57-residue polypeptide: Orphan toxin OrtT (57 aa).

A run of 2 helical transmembrane segments spans residues 6-26 (HMLV…WFLS) and 34-54 (FLSA…ALLF).

The protein belongs to the GhoT/OrtT toxin family.

It is found in the cell inner membrane. Acts as an orphan toxin which is important for maintaining cell fitness during stress related to the stringent response. Increases the formation of persister cells. Has no known antitoxin. This Escherichia coli O6:H1 (strain CFT073 / ATCC 700928 / UPEC) protein is Orphan toxin OrtT.